We begin with the raw amino-acid sequence, 878 residues long: Protein translocase subunit SecA (878 aa).

ATP-binding positions include Gln79, 97–101 (GEGKT), and Asp487.

Belongs to the SecA family.

It is found in the plastid. Its subcellular location is the chloroplast stroma. The protein resides in the chloroplast thylakoid membrane. The enzyme catalyses ATP + H2O + cellular proteinSide 1 = ADP + phosphate + cellular proteinSide 2.. In terms of biological role, has a central role in coupling the hydrolysis of ATP to the transfer of proteins across the thylakoid membrane. This is Protein translocase subunit SecA from Antithamnion sp. (Red alga).